Here is a 680-residue protein sequence, read N- to C-terminus: MSEKQTPVKELTLQEAQDEIKPLRAKLTKWGKEYYEQDNPTVEDHVYDRAYQRLVQLEEQFPQLVSADSPTQRVGGATESQLTKVRHEIPMLSMGDVFSIEELMDFNQRQQENRDVEVEPEYNLELKIDGLSLSLVYENGKLVQGSTRGNGTIGEDVTANVRTIKSVPAELPEPLSIEVRGECYMPKAAFAKLNAKREAEGLPVFANPRNAAAGSLRQLDPKVTAQRELDTFMYYVPEYQKIGVKTQAEALDRMRELGFNVNPNNRVVHNRDEIEKYIEEYTAQRDKLTYGIDGIVEKVNDLDTEVALGNTVKVPRWEIAYKFPPEEQATIVRDIVWTVGRTGNVTPTAVMDPVQLAGTTVSRASLHNPDYLREKDIRIGDTVYLHKAGDIIPEISKVDLTKRPADSVEYEIPTKCPVCGSELVHLDGEVALRCINPMCPAQIKEGLAHFASRNAMNIDGLGPRIIEQLWDKELIHDVAGLYRLNHDQLLTLDKFGEKSTANLLTSIDNSRNNSVERLLFGLGIRHVGAKAARIIMEHFGDLDSLMKADADEISAISGIGPTIGESIVTYFANQQVVKLIDELREVGVNFAYLGSRSNANPDSEWNGRRVVLTGKLTEMTRGEAKSWLENHGAKVTESVSKKTDIVIAGADAGSKLTKAQNLGIDVWNEQQFSQAMKEEQ.

Residues 44 to 48 (DHVYD), 93 to 94 (SM), and E125 each bind NAD(+). K127 serves as the catalytic N6-AMP-lysine intermediate. R148, E182, K298, and K322 together coordinate NAD(+). C416, C419, C434, and C439 together coordinate Zn(2+). The BRCT domain occupies 600-680 (NPDSEWNGRR…QFSQAMKEEQ (81 aa)).

Belongs to the NAD-dependent DNA ligase family. LigA subfamily. Mg(2+) serves as cofactor. Mn(2+) is required as a cofactor.

It catalyses the reaction NAD(+) + (deoxyribonucleotide)n-3'-hydroxyl + 5'-phospho-(deoxyribonucleotide)m = (deoxyribonucleotide)n+m + AMP + beta-nicotinamide D-nucleotide.. In terms of biological role, DNA ligase that catalyzes the formation of phosphodiester linkages between 5'-phosphoryl and 3'-hydroxyl groups in double-stranded DNA using NAD as a coenzyme and as the energy source for the reaction. It is essential for DNA replication and repair of damaged DNA. The sequence is that of DNA ligase from Limosilactobacillus reuteri (strain DSM 20016) (Lactobacillus reuteri).